A 64-amino-acid polypeptide reads, in one-letter code: Prokaryotic ubiquitin-like protein Pup (64 aa).

Residues 1–37 form a disordered region; sequence MAQEQTKRGGGGGDDDDIAGSTAAGQERREKLTEETD. The tract at residues 21–58 is ARC ATPase binding; sequence STAAGQERREKLTEETDDLLDEIDDVLEENAEDFVRAY. Residues 23 to 52 adopt a coiled-coil conformation; it reads AAGQERREKLTEETDDLLDEIDDVLEENAE. At Q64 the chain carries Deamidated glutamine. Q64 participates in a covalent cross-link: Isoglutamyl lysine isopeptide (Gln-Lys) (interchain with K-? in acceptor proteins).

This sequence belongs to the prokaryotic ubiquitin-like protein family. As to quaternary structure, strongly interacts with the proteasome-associated ATPase ARC through a hydrophobic interface; the interacting region of Pup lies in its C-terminal half. There is one Pup binding site per ARC hexamer ring. Post-translationally, is modified by deamidation of its C-terminal glutamine to glutamate by the deamidase Dop, a prerequisite to the subsequent pupylation process.

The protein operates within protein degradation; proteasomal Pup-dependent pathway. Functionally, protein modifier that is covalently attached to lysine residues of substrate proteins, thereby targeting them for proteasomal degradation. The tagging system is termed pupylation. The sequence is that of Prokaryotic ubiquitin-like protein Pup from Mycobacterium tuberculosis (strain ATCC 25177 / H37Ra).